A 334-amino-acid polypeptide reads, in one-letter code: Aspartate carbamoyltransferase catalytic subunit (334 aa).

2 residues coordinate carbamoyl phosphate: Arg-71 and Thr-72. Lys-99 is an L-aspartate binding site. Positions 121, 151, and 154 each coordinate carbamoyl phosphate. Arg-184 and Arg-239 together coordinate L-aspartate. The carbamoyl phosphate site is built by Gly-280 and Pro-281.

Belongs to the aspartate/ornithine carbamoyltransferase superfamily. ATCase family. In terms of assembly, heterododecamer (2C3:3R2) of six catalytic PyrB chains organized as two trimers (C3), and six regulatory PyrI chains organized as three dimers (R2).

The catalysed reaction is carbamoyl phosphate + L-aspartate = N-carbamoyl-L-aspartate + phosphate + H(+). It participates in pyrimidine metabolism; UMP biosynthesis via de novo pathway; (S)-dihydroorotate from bicarbonate: step 2/3. Catalyzes the condensation of carbamoyl phosphate and aspartate to form carbamoyl aspartate and inorganic phosphate, the committed step in the de novo pyrimidine nucleotide biosynthesis pathway. This is Aspartate carbamoyltransferase catalytic subunit from Pseudomonas putida (strain GB-1).